Consider the following 68-residue polypeptide: Protein ShdD (68 aa).

Functionally, involved in the non-oxidative decarboxylation and detoxification of phenolic derivatives under anaerobic conditions, however the precise biochemical function of ShdD in metabolism of phenolic acid is unknown. This is Protein ShdD from Sedimentibacter hydroxybenzoicus (Clostridium hydroxybenzoicum).